The chain runs to 55 residues: ATP synthase protein 8 (55 aa).

A helical transmembrane segment spans residues 7-24; that stretch reads NPWLFIMLMSWLTFSLII. The interval 35–55 is disordered; the sequence is NPPSNKTPTTTKTSPWTWPWT. A compositionally biased stretch (low complexity) spans 37-55; that stretch reads PSNKTPTTTKTSPWTWPWT.

It belongs to the ATPase protein 8 family. In terms of assembly, F-type ATPases have 2 components, CF(1) - the catalytic core - and CF(0) - the membrane proton channel.

The protein resides in the mitochondrion membrane. Functionally, mitochondrial membrane ATP synthase (F(1)F(0) ATP synthase or Complex V) produces ATP from ADP in the presence of a proton gradient across the membrane which is generated by electron transport complexes of the respiratory chain. F-type ATPases consist of two structural domains, F(1) - containing the extramembraneous catalytic core and F(0) - containing the membrane proton channel, linked together by a central stalk and a peripheral stalk. During catalysis, ATP synthesis in the catalytic domain of F(1) is coupled via a rotary mechanism of the central stalk subunits to proton translocation. Part of the complex F(0) domain. Minor subunit located with subunit a in the membrane. This is ATP synthase protein 8 (MT-ATP8) from Corythaeola cristata (Great blue turaco).